The primary structure comprises 555 residues: Urocanate hydratase (555 aa).

Residues 51–52 (GG), glutamine 129, 175–177 (GMG), glutamate 195, 262–266 (QTSAH), 272–273 (YL), and tyrosine 321 contribute to the NAD(+) site. The active site involves cysteine 409. Glycine 491 contributes to the NAD(+) binding site.

The protein belongs to the urocanase family. The cofactor is NAD(+).

Its subcellular location is the cytoplasm. It catalyses the reaction 4-imidazolone-5-propanoate = trans-urocanate + H2O. Its pathway is amino-acid degradation; L-histidine degradation into L-glutamate; N-formimidoyl-L-glutamate from L-histidine: step 2/3. In terms of biological role, catalyzes the conversion of urocanate to 4-imidazolone-5-propionate. This chain is Urocanate hydratase, found in Xanthomonas axonopodis pv. citri (strain 306).